We begin with the raw amino-acid sequence, 148 residues long: uncharacterized protein (148 aa).

Helical transmembrane passes span 20-42 (YYSK…IANY), 52-74 (YFLM…VRCY), and 118-135 (IIRY…CTYI).

The protein resides in the cell membrane. This is an uncharacterized protein from Rickettsia prowazekii (strain Madrid E).